The sequence spans 505 residues: ATP synthase subunit alpha (505 aa).

Residue 170-177 (GDRQTGKT) coordinates ATP.

The protein belongs to the ATPase alpha/beta chains family. F-type ATPases have 2 components, CF(1) - the catalytic core - and CF(0) - the membrane proton channel. CF(1) has five subunits: alpha(3), beta(3), gamma(1), delta(1), epsilon(1). CF(0) has four main subunits: a(1), b(1), b'(1) and c(9-12).

It is found in the cellular thylakoid membrane. The enzyme catalyses ATP + H2O + 4 H(+)(in) = ADP + phosphate + 5 H(+)(out). Produces ATP from ADP in the presence of a proton gradient across the membrane. The alpha chain is a regulatory subunit. The protein is ATP synthase subunit alpha of Prochlorococcus marinus (strain MIT 9515).